Here is a 475-residue protein sequence, read N- to C-terminus: Glycogen synthase (475 aa).

Lysine 15 provides a ligand contact to ADP-alpha-D-glucose.

This sequence belongs to the glycosyltransferase 1 family. Bacterial/plant glycogen synthase subfamily.

The catalysed reaction is [(1-&gt;4)-alpha-D-glucosyl](n) + ADP-alpha-D-glucose = [(1-&gt;4)-alpha-D-glucosyl](n+1) + ADP + H(+). It participates in glycan biosynthesis; glycogen biosynthesis. Synthesizes alpha-1,4-glucan chains using ADP-glucose. The sequence is that of Glycogen synthase from Chlamydia felis (strain Fe/C-56) (Chlamydophila felis).